The following is a 329-amino-acid chain: Glycosyltransferase family protein 64 C3 (329 aa).

The signal sequence occupies residues 1-27 (MGVKSVRFSIWFLFVVTDLVFCRTLSG). N-linked (GlcNAc...) asparagine glycosylation occurs at N99. Substrate contacts are provided by residues 118–123 (SSLNAR), 139–141 (DDD), R169, 226–230 (RNCED), and 271–284 (VGLSSRRVEHRKRR). D141 contributes to the Mn(2+) binding site. The cysteines at positions 228 and 287 are disulfide-linked. Residue D230 is part of the active site. A substrate binding region spans residues 268-284 (VRDVGLSSRRVEHRKRR).

Belongs to the glycosyltransferase 64 family. The cofactor is Mn(2+).

The protein operates within protein modification; protein glycosylation. Probable glycosyltransferase. The polypeptide is Glycosyltransferase family protein 64 C3 (Arabidopsis thaliana (Mouse-ear cress)).